We begin with the raw amino-acid sequence, 654 residues long: Probable replication restart protein PriA (654 aa).

Positions 367, 370, 376, 379, 395, 398, 407, and 410 each coordinate Zn(2+).

Belongs to the helicase family. PriA subfamily. Component of the replication restart primosome. The cofactor is Zn(2+).

Its function is as follows. Initiates the restart of stalled replication forks, which reloads the replicative helicase on sites other than the origin of replication. Recognizes and binds to abandoned replication forks and remodels them to uncover a helicase loading site. Promotes assembly of the primosome at these replication forks. This chain is Probable replication restart protein PriA, found in Mycobacterium tuberculosis (strain CDC 1551 / Oshkosh).